The primary structure comprises 670 residues: Probable potassium transport system protein Kup 1 (670 aa).

13 helical membrane passes run Gly14–Tyr34, Leu58–Leu78, Trp101–Pro121, Leu147–Gly167, Phe175–Phe195, Gly196–Pro216, Ala220–Ser240, Val252–Leu272, Leu294–Ile314, Leu345–Phe365, Ala374–Leu394, Val403–Ser423, and Phe427–Ile447.

It belongs to the HAK/KUP transporter (TC 2.A.72) family.

Its subcellular location is the cell membrane. The catalysed reaction is K(+)(in) + H(+)(in) = K(+)(out) + H(+)(out). Its function is as follows. Transport of potassium into the cell. Likely operates as a K(+):H(+) symporter. This is Probable potassium transport system protein Kup 1 from Lactococcus lactis subsp. lactis (strain IL1403) (Streptococcus lactis).